The sequence spans 323 residues: tRNA N6-adenosine threonylcarbamoyltransferase (323 aa).

Fe cation-binding residues include H110 and H114. Substrate-binding positions include 131-135 (VASGG), D164, G177, and N264. D288 provides a ligand contact to Fe cation.

It belongs to the KAE1 / TsaD family. Requires Fe(2+) as cofactor.

It is found in the cytoplasm. The enzyme catalyses L-threonylcarbamoyladenylate + adenosine(37) in tRNA = N(6)-L-threonylcarbamoyladenosine(37) in tRNA + AMP + H(+). Its function is as follows. Required for the formation of a threonylcarbamoyl group on adenosine at position 37 (t(6)A37) in tRNAs that read codons beginning with adenine. Is involved in the transfer of the threonylcarbamoyl moiety of threonylcarbamoyl-AMP (TC-AMP) to the N6 group of A37, together with TsaE and TsaB. TsaD likely plays a direct catalytic role in this reaction. The sequence is that of tRNA N6-adenosine threonylcarbamoyltransferase from Thermus thermophilus (strain ATCC BAA-163 / DSM 7039 / HB27).